Reading from the N-terminus, the 217-residue chain is Ribosomal RNA small subunit methyltransferase G (217 aa).

S-adenosyl-L-methionine-binding positions include glycine 85, leucine 90, 135–136 (IE), and arginine 149.

It belongs to the methyltransferase superfamily. RNA methyltransferase RsmG family.

The protein resides in the cytoplasm. It catalyses the reaction guanosine(527) in 16S rRNA + S-adenosyl-L-methionine = N(7)-methylguanosine(527) in 16S rRNA + S-adenosyl-L-homocysteine. In terms of biological role, specifically methylates the N7 position of guanine in position 527 of 16S rRNA. This is Ribosomal RNA small subunit methyltransferase G from Acidiphilium cryptum (strain JF-5).